A 208-amino-acid chain; its full sequence is Protein-L-isoaspartate O-methyltransferase (208 aa).

The active site involves serine 59.

This sequence belongs to the methyltransferase superfamily. L-isoaspartyl/D-aspartyl protein methyltransferase family.

It localises to the cytoplasm. The enzyme catalyses [protein]-L-isoaspartate + S-adenosyl-L-methionine = [protein]-L-isoaspartate alpha-methyl ester + S-adenosyl-L-homocysteine. In terms of biological role, catalyzes the methyl esterification of L-isoaspartyl residues in peptides and proteins that result from spontaneous decomposition of normal L-aspartyl and L-asparaginyl residues. It plays a role in the repair and/or degradation of damaged proteins. This is Protein-L-isoaspartate O-methyltransferase from Salmonella paratyphi A (strain ATCC 9150 / SARB42).